The following is a 378-amino-acid chain: O-glycoside alpha-1,2-mannosyltransferase homolog 3 (378 aa).

The Cytoplasmic segment spans residues M1–S6. The chain crosses the membrane as a helical; Signal-anchor for type II membrane protein span at residues S7–S24. Residues S25 to S378 are Lumenal-facing. E276 functions as the Nucleophile in the catalytic mechanism.

It belongs to the glycosyltransferase 15 family.

It localises to the endoplasmic reticulum membrane. It is found in the golgi apparatus membrane. Probable mannosyltransferase involved in O-glycosylation of cell wall and secreted proteins. This is O-glycoside alpha-1,2-mannosyltransferase homolog 3 (omh3) from Schizosaccharomyces pombe (strain 972 / ATCC 24843) (Fission yeast).